The primary structure comprises 91 residues: Small ribosomal subunit protein bS16c (91 aa).

This sequence belongs to the bacterial ribosomal protein bS16 family.

It is found in the plastid. It localises to the chloroplast. In Vitis vinifera (Grape), this protein is Small ribosomal subunit protein bS16c.